The primary structure comprises 37 residues: Delta/kappa-conotoxin Mo3964 (37 aa).

Cystine bridges form between Cys4–Cys12, Cys11–Cys27, and Cys21–Cys34.

As to expression, expressed by the venom duct.

It is found in the secreted. In terms of biological role, this toxin reduces the outward currents that are due to the opening of voltage-gated potassium channels in DRG neurons. In addition, leftward shift in the presence of this toxin is observed in averaged normalized conductance-voltage plot of outward sodium currents (Nav1.2/SCN2A). In Conus monile (Necklace cone), this protein is Delta/kappa-conotoxin Mo3964.